Consider the following 214-residue polypeptide: Ceramide-1-phosphate transfer protein (214 aa).

An N-acylsphingoid base 1-phosphate contacts are provided by aspartate 56, lysine 60, arginine 106, arginine 110, and histidine 150.

It belongs to the GLTP family.

It localises to the cytoplasm. The protein resides in the cytosol. Its subcellular location is the golgi apparatus. The protein localises to the trans-Golgi network membrane. It is found in the cell membrane. It localises to the endosome membrane. The protein resides in the nucleus outer membrane. The catalysed reaction is N-(hexadecanoyl)-sphing-4-enine-1-phosphate(in) = N-(hexadecanoyl)-sphing-4-enine-1-phosphate(out). It carries out the reaction N-(9Z-octadecenoyl)-sphing-4-enine-1-phosphate(in) = N-(9Z-octadecenoyl)-sphing-4-enine-1-phosphate(out). Its function is as follows. Mediates the intracellular transfer of ceramide-1-phosphate (C1P) between organelle membranes and the cell membrane. Required for normal structure of the Golgi stacks. Can bind phosphoceramides with a variety of aliphatic chains, but has a preference for lipids with saturated C16:0 or monounsaturated C18:1 aliphatic chains, and is inefficient with phosphoceramides containing lignoceryl (C24:0). Plays a role in the regulation of the cellular levels of ceramide-1-phosphate, and thereby contributes to the regulation of phospholipase PLA2G4A activity and the release of arachidonic acid. Has no activity with galactosylceramide, lactosylceramide, sphingomyelin, phosphatidylcholine, phosphatidic acid and ceramide. C1P transfer is stimulated by phosphatidylserine in C1P source vesicles. Regulates autophagy, inflammasome mediated IL1B and IL18 processing, and pyroptosis, but not apoptosis. This chain is Ceramide-1-phosphate transfer protein (CPTP), found in Bos taurus (Bovine).